The primary structure comprises 89 residues: Small ribosomal subunit protein uS15 (89 aa).

This sequence belongs to the universal ribosomal protein uS15 family. Part of the 30S ribosomal subunit. Forms a bridge to the 50S subunit in the 70S ribosome, contacting the 23S rRNA.

Functionally, one of the primary rRNA binding proteins, it binds directly to 16S rRNA where it helps nucleate assembly of the platform of the 30S subunit by binding and bridging several RNA helices of the 16S rRNA. Its function is as follows. Forms an intersubunit bridge (bridge B4) with the 23S rRNA of the 50S subunit in the ribosome. The protein is Small ribosomal subunit protein uS15 of Lactococcus lactis subsp. lactis (strain IL1403) (Streptococcus lactis).